The sequence spans 252 residues: uncharacterized protein (252 aa).

Residues 3-58 enclose the HTH deoR-type domain; the sequence is AKDRIQAIKQMVANDKKVTVSNLSGIFQVTEETIRRDLEKLEDEGFLTRTYGGAVL. The segment at residues 20-39 is a DNA-binding region (H-T-H motif); the sequence is VTVSNLSGIFQVTEETIRRD.

This is an uncharacterized protein from Escherichia coli (strain K12).